A 160-amino-acid polypeptide reads, in one-letter code: Adenosine 5'-monophosphoramidase HINT3 (160 aa).

Residues 24–132 form the HIT domain; sequence IFCTIAKGDD…LAPYSQLYKW (109 aa). AMP contacts are provided by residues 50 to 51 and 119 to 121; these read DI and HLH. The Histidine triad motif motif lies at 117 to 121; it reads HLHLH. The active-site Tele-AMP-histidine intermediate is the His-119.

The protein belongs to the HINT family. In terms of assembly, forms dimers to octamers and even larger oligomer.

The protein resides in the cytoplasm. Its subcellular location is the nucleus. It catalyses the reaction adenosine 5'-phosphoramidate + H2O = AMP + NH4(+). Functionally, exhibits adenosine 5'-monophosphoramidase activity, hydrolyzing purine nucleotide phosphoramidates with a single phosphate group such as adenosine 5'monophosphoramidate (AMP-NH2) to yield AMP and NH2. Hydrolyzes lysyl-AMP (AMP-N-epsilon-(N-alpha-acetyl lysine methyl ester)) generated by lysine tRNA ligase. This chain is Adenosine 5'-monophosphoramidase HINT3 (hint3), found in Danio rerio (Zebrafish).